The following is a 63-amino-acid chain: MNFVRILSFVFALVLALGAVSAAPEPRWKLFKKIEKVGRNVRDGLIKAGPAIAVIGQAKSLGK.

An N-terminal signal peptide occupies residues 1–22 (MNFVRILSFVFALVLALGAVSA). Residues 23-26 (APEP) constitute a propeptide that is removed on maturation. Position 61 is a leucine amide (leucine 61).

It belongs to the cecropin family. In terms of tissue distribution, highest expression in fat body and hemocytes. Is also expressed in Malpighian tubules and to a much lesser extent in midgut. Not present in silk gland.

It is found in the secreted. Functionally, cecropins have lytic and antibacterial activity against several Gram-positive and Gram-negative bacteria. The sequence is that of Cecropin-A (CECA) from Bombyx mori (Silk moth).